Here is a 179-residue protein sequence, read N- to C-terminus: Large ribosomal subunit protein uL5 (179 aa).

It belongs to the universal ribosomal protein uL5 family. In terms of assembly, part of the 50S ribosomal subunit; part of the 5S rRNA/L5/L18/L25 subcomplex. Contacts the 5S rRNA and the P site tRNA. Forms a bridge to the 30S subunit in the 70S ribosome.

In terms of biological role, this is one of the proteins that bind and probably mediate the attachment of the 5S RNA into the large ribosomal subunit, where it forms part of the central protuberance. In the 70S ribosome it contacts protein S13 of the 30S subunit (bridge B1b), connecting the 2 subunits; this bridge is implicated in subunit movement. Contacts the P site tRNA; the 5S rRNA and some of its associated proteins might help stabilize positioning of ribosome-bound tRNAs. In Pectobacterium carotovorum subsp. carotovorum (strain PC1), this protein is Large ribosomal subunit protein uL5.